Reading from the N-terminus, the 200-residue chain is uncharacterized protein (200 aa).

Residues S104–G124 traverse the membrane as a helical segment.

Its subcellular location is the membrane. This is an uncharacterized protein from Escherichia coli (strain K12).